We begin with the raw amino-acid sequence, 757 residues long: Transferrin receptor protein 1 (757 aa).

The Cytoplasmic segment spans residues 1-67 (MMDQARSAIS…KHRRLNGRLC (67 aa)). Residues 1 to 67 (MMDQARSAIS…KHRRLNGRLC (67 aa)) are mediates interaction with SH3BP4. A phosphoserine mark is found at S10 and S19. Position 20 is a phosphotyrosine (Y20). The short motif at 20–23 (YTRF) is the Endocytosis signal element. At T21 the chain carries Phosphothreonine. S24 is subject to Phosphoserine. The short motif at 58 to 61 (KHRR) is the Stop-transfer sequence element. C67 is lipidated: S-palmitoyl cysteine. A helical; Signal-anchor for type II membrane protein transmembrane segment spans residues 68 to 88 (FGTIAVVIFFLIGFMIGYLGY). Residues 89–757 (CKRTEQKDCV…GDIWDIDNEF (669 aa)) lie on the Extracellular side of the membrane. T103 is a glycosylation site (O-linked (GalNAc...) threonine). Residues 220–310 (SKATTVSGKL…GTGDPYTPGF (91 aa)) enclose the PA domain. N-linked (GlcNAc...) asparagine glycans are attached at residues N248 and N314. Residues 566–757 (NLDTYEKLIQ…GDIWDIDNEF (192 aa)) form a ligand-binding region. Positions 643 to 645 (RGD) match the Cell attachment site motif. N-linked (GlcNAc...) asparagine glycans are attached at residues N719 and N724.

It belongs to the peptidase M28 family. M28B subfamily. In terms of assembly, homodimer; disulfide-linked. Binds one transferrin molecule per subunit. Interacts with SH3BP4. Interacts with STEAP3; facilitates TFRC endocytosis in erythroid precursor cells. In terms of processing, stearoylated by ZDHHC6 which inhibits TFRC-mediated activation of the JNK pathway and promotes mitochondrial fragmentation. Stearoylation does not affect iron uptake. N- and O-glycosylated, phosphorylated and palmitoylated.

It localises to the cell membrane. It is found in the melanosome. In terms of biological role, cellular uptake of iron occurs via receptor-mediated endocytosis of ligand-occupied transferrin receptor into specialized endosomes. Endosomal acidification leads to iron release. The apotransferrin-receptor complex is then recycled to the cell surface with a return to neutral pH and the concomitant loss of affinity of apotransferrin for its receptor. Transferrin receptor is necessary for development of erythrocytes and the nervous system. Positively regulates T and B cell proliferation through iron uptake. Acts as a lipid sensor that regulates mitochondrial fusion by regulating activation of the JNK pathway. When dietary levels of stearate (C18:0) are low, promotes activation of the JNK pathway, resulting in HUWE1-mediated ubiquitination and subsequent degradation of the mitofusin MFN2 and inhibition of mitochondrial fusion. When dietary levels of stearate (C18:0) are high, TFRC stearoylation inhibits activation of the JNK pathway and thus degradation of the mitofusin MFN2. Mediates uptake of NICOL1 into fibroblasts where it may regulate extracellular matrix production. The chain is Transferrin receptor protein 1 (TFRC) from Cricetulus griseus (Chinese hamster).